An 82-amino-acid polypeptide reads, in one-letter code: Conotoxin MiK42 (82 aa).

A signal peptide spans methionine 1–threonine 22. Positions aspartate 23–threonine 49 are excised as a propeptide. 3 disulfide bridges follow: cysteine 52–cysteine 67, cysteine 59–cysteine 70, and cysteine 66–cysteine 80.

The protein belongs to the conotoxin O1 superfamily. In terms of tissue distribution, expressed by the venom duct.

It localises to the secreted. The polypeptide is Conotoxin MiK42 (Conus miles (Soldier cone)).